Reading from the N-terminus, the 208-residue chain is Dephospho-CoA kinase (208 aa).

The 197-residue stretch at Ile5–Ala201 folds into the DPCK domain. Position 13 to 18 (Gly13 to Thr18) interacts with ATP.

Belongs to the CoaE family.

The protein resides in the cytoplasm. The catalysed reaction is 3'-dephospho-CoA + ATP = ADP + CoA + H(+). It functions in the pathway cofactor biosynthesis; coenzyme A biosynthesis; CoA from (R)-pantothenate: step 5/5. Functionally, catalyzes the phosphorylation of the 3'-hydroxyl group of dephosphocoenzyme A to form coenzyme A. This Sodalis glossinidius (strain morsitans) protein is Dephospho-CoA kinase.